Consider the following 125-residue polypeptide: Small ribosomal subunit protein uS13 (125 aa).

Residues 92-125 (RRSLPARGQRTRTNARTRKGKRKTVAGKKKAGKK) are disordered.

This sequence belongs to the universal ribosomal protein uS13 family. As to quaternary structure, part of the 30S ribosomal subunit. Forms a loose heterodimer with protein S19. Forms two bridges to the 50S subunit in the 70S ribosome.

Functionally, located at the top of the head of the 30S subunit, it contacts several helices of the 16S rRNA. In the 70S ribosome it contacts the 23S rRNA (bridge B1a) and protein L5 of the 50S subunit (bridge B1b), connecting the 2 subunits; these bridges are implicated in subunit movement. Contacts the tRNAs in the A and P-sites. The chain is Small ribosomal subunit protein uS13 from Chlorobaculum parvum (strain DSM 263 / NCIMB 8327) (Chlorobium vibrioforme subsp. thiosulfatophilum).